Here is a 153-residue protein sequence, read N- to C-terminus: 3-dehydroquinate dehydratase (153 aa).

Y26 (proton acceptor) is an active-site residue. 3 residues coordinate substrate: N77, H83, and D90. Residue H103 is the Proton donor of the active site. Substrate-binding positions include L104–S105 and R114.

Belongs to the type-II 3-dehydroquinase family. Homododecamer.

The enzyme catalyses 3-dehydroquinate = 3-dehydroshikimate + H2O. The protein operates within metabolic intermediate biosynthesis; chorismate biosynthesis; chorismate from D-erythrose 4-phosphate and phosphoenolpyruvate: step 3/7. In terms of biological role, catalyzes a trans-dehydration via an enolate intermediate. This chain is 3-dehydroquinate dehydratase, found in Colwellia psychrerythraea (strain 34H / ATCC BAA-681) (Vibrio psychroerythus).